Consider the following 502-residue polypeptide: Cytochrome P450 monooxygenase prhN (502 aa).

A helical membrane pass occupies residues 14 to 30 (SGALLIVGILLLRWALW). Asn165 carries N-linked (GlcNAc...) asparagine glycosylation. Cys443 is a binding site for heme. A glycan (N-linked (GlcNAc...) asparagine) is linked at Asn474.

The protein belongs to the cytochrome P450 family. It depends on heme as a cofactor.

The protein localises to the membrane. It participates in secondary metabolite biosynthesis; terpenoid biosynthesis. In terms of biological role, cytochrome P450 monooxygenase; part of the gene cluster that mediates the biosynthesis of paraherquonin, a meroterpenoid with a unique, highly congested hexacyclic molecular architecture. The first step of the pathway is the synthesis of 3,5-dimethylorsellinic acid (DMOA) by the polyketide synthase prhL. Synthesis of DMOA is followed by farnesylation by the prenyltransferase prhE, methylesterification by the methyl-transferase prhM, epoxidation of the prenyl chain by the flavin-dependent monooxygenase prhF, and cyclization of the farnesyl moiety by the terpene cyclase prhH, to yield the tetracyclic intermediate, protoaustinoid A. The short chain dehydrogenase prhI then oxidizes the C-3 alcohol group of the terpene cyclase product to transform protoaustinoid A into protoaustinoid B. The FAD-binding monooxygenase prhJ catalyzes the oxidation of protoaustinoid B into preaustinoid A which is further oxidized into preaustinoid A1 by FAD-binding monooxygenase phrK. Finally, prhA leads to berkeleydione via the berkeleyone B intermediate. PrhA is a multifunctional dioxygenase that first desaturates at C5-C6 to form berkeleyone B, followed by rearrangement of the A/B-ring to form the cycloheptadiene moiety in berkeleydione. Berkeleydione serves as the key intermediate for the biosynthesis of paraherquonin as well as many other meroterpenoids. The cytochrome P450 monooxygenases prhB, prhD, and prhN, as well as the isomerase prhC, are probably involved in the late stage of paraherquonin biosynthesis, after the production of berkeleydione. Especially prhC might be a multifunctional enzyme that catalyzes the D-ring expansion via intramolecular methoxy rearrangement, as well as the hydrolysis of the expanded D-ring. The protein is Cytochrome P450 monooxygenase prhN of Penicillium brasilianum.